A 198-amino-acid polypeptide reads, in one-letter code: HTH-type transcriptional regulator BetI (198 aa).

The HTH tetR-type domain maps to 8–68 (PIRRQQLIEA…ATMRYLIRHL (61 aa)). The H-T-H motif DNA-binding region spans 31–50 (SIAQIAKRAGVSNGIISHYF).

It functions in the pathway amine and polyamine biosynthesis; betaine biosynthesis via choline pathway [regulation]. In terms of biological role, repressor involved in the biosynthesis of the osmoprotectant glycine betaine. It represses transcription of the choline transporter BetT and the genes of BetAB involved in the synthesis of glycine betaine. The sequence is that of HTH-type transcriptional regulator BetI from Yersinia pseudotuberculosis serotype O:1b (strain IP 31758).